Consider the following 510-residue polypeptide: NAD(P)H-quinone oxidoreductase subunit 2, chloroplastic (510 aa).

A run of 13 helical transmembrane segments spans residues 28-48, 57-77, 99-119, 124-144, 149-169, 183-203, 227-247, 295-315, 323-343, 354-374, 395-415, 418-438, and 484-504; these read DGSFIFPECILIFGLILLLII, IPWLYFISSTSLVMSITTLLF, IFQFLILLCSTLCIPLSVEYI, MALTEFLLFVLTATLGGMFLC, LITIFVAPECFSLCSYLLSGY, YLLMGGTSSSILVHGFSWLYG, PGISIALIFITVGIGFKLSPA, WHLLLEILAILSMILGNLIAI, MLAYSSIGQIGYVIIGIIVGD, YMLFYISMNLGTFACIVLFGL, ALSLALCLLSLGGLPPLAGFF, LYLFWCGWQAGLYLLVLIGLL, and MIVCVIASTIPGISMNPIIAI.

It belongs to the complex I subunit 2 family. As to quaternary structure, NDH is composed of at least 16 different subunits, 5 of which are encoded in the nucleus.

Its subcellular location is the plastid. The protein resides in the chloroplast thylakoid membrane. It carries out the reaction a plastoquinone + NADH + (n+1) H(+)(in) = a plastoquinol + NAD(+) + n H(+)(out). The enzyme catalyses a plastoquinone + NADPH + (n+1) H(+)(in) = a plastoquinol + NADP(+) + n H(+)(out). In terms of biological role, NDH shuttles electrons from NAD(P)H:plastoquinone, via FMN and iron-sulfur (Fe-S) centers, to quinones in the photosynthetic chain and possibly in a chloroplast respiratory chain. The immediate electron acceptor for the enzyme in this species is believed to be plastoquinone. Couples the redox reaction to proton translocation, and thus conserves the redox energy in a proton gradient. The chain is NAD(P)H-quinone oxidoreductase subunit 2, chloroplastic from Silene latifolia (White campion).